The chain runs to 117 residues: Ribonuclease P protein component (117 aa).

This sequence belongs to the RnpA family. In terms of assembly, consists of a catalytic RNA component (M1 or rnpB) and a protein subunit.

The enzyme catalyses Endonucleolytic cleavage of RNA, removing 5'-extranucleotides from tRNA precursor.. RNaseP catalyzes the removal of the 5'-leader sequence from pre-tRNA to produce the mature 5'-terminus. It can also cleave other RNA substrates such as 4.5S RNA. The protein component plays an auxiliary but essential role in vivo by binding to the 5'-leader sequence and broadening the substrate specificity of the ribozyme. In Thermotoga petrophila (strain ATCC BAA-488 / DSM 13995 / JCM 10881 / RKU-1), this protein is Ribonuclease P protein component.